Reading from the N-terminus, the 402-residue chain is S-adenosylmethionine synthase (402 aa).

Residue 137 to 142 (GQGSAD) participates in ATP binding.

This sequence belongs to the AdoMet synthase 2 family. It depends on Mg(2+) as a cofactor.

It catalyses the reaction L-methionine + ATP + H2O = S-adenosyl-L-methionine + phosphate + diphosphate. It participates in amino-acid biosynthesis; S-adenosyl-L-methionine biosynthesis; S-adenosyl-L-methionine from L-methionine: step 1/1. Catalyzes the formation of S-adenosylmethionine from methionine and ATP. This chain is S-adenosylmethionine synthase, found in Pyrobaculum neutrophilum (strain DSM 2338 / JCM 9278 / NBRC 100436 / V24Sta) (Thermoproteus neutrophilus).